A 188-amino-acid polypeptide reads, in one-letter code: Elongation factor P-like protein (188 aa).

The protein belongs to the elongation factor P family.

This is Elongation factor P-like protein from Marinobacter nauticus (strain ATCC 700491 / DSM 11845 / VT8) (Marinobacter aquaeolei).